The primary structure comprises 1088 residues: Adenylate-forming reductase Nps10 (1088 aa).

The interval 1–22 (MSSVSIQIPLPTPPPTQAHNSQ) is disordered. An adenylation (A) domain region spans residues 38–451 (FDWHSKNSPN…KIFGRTDDQI (414 aa)). Residues H261, 357-358 (NL), T362, and 443-446 (IFGR) each bind AMP. The Carrier domain occupies 586 to 668 (AWDSAKTLGF…SLASFVSSVA (83 aa)). Residue S621 is modified to O-(pantetheine 4'-phosphoryl)serine. Positions 712–951 (LTGSTGALGS…IPVNVAAAAI (240 aa)) are reductase (R) domain. NADP(+) is bound by residues 716-719 (TGAL), 804-806 (NAW), Y875, and K879.

Belongs to the adenylate-forming reductase family.

Its function is as follows. Adenylate-forming reductase, a natural product biosynthesis enzyme that resembles non-ribosomal peptide synthetases, yet serves to modify one substrate, rather than to condense two or more building blocks. The A-domain preferentially accepts phenylpyruvic acid and benzoic acid as substrate. The natural product of the enzyme is not yet known. In Heterobasidion annosum (Root rot fungus), this protein is Adenylate-forming reductase Nps10.